Here is a 546-residue protein sequence, read N- to C-terminus: CTP synthase (546 aa).

The segment at 1-269 (MNSNTKIIFV…DAKLVELLNL (269 aa)) is amidoligase domain. Residue S16 participates in CTP binding. S16 provides a ligand contact to UTP. ATP contacts are provided by residues 17–22 (SLGKGV) and D74. Mg(2+)-binding residues include D74 and E143. CTP contacts are provided by residues 150–152 (DIE), 190–195 (KTKPTQ), and K226. UTP contacts are provided by residues 190–195 (KTKPTQ) and K226. The 253-residue stretch at 294 to 546 (TIAMVGKYVS…IQAAIENSNN (253 aa)) folds into the Glutamine amidotransferase type-1 domain. An L-glutamine-binding site is contributed by G356. The active-site Nucleophile; for glutamine hydrolysis is C383. Residues 384–387 (LGMQ), E407, and R474 contribute to the L-glutamine site. Active-site residues include H519 and E521.

The protein belongs to the CTP synthase family. Homotetramer.

It catalyses the reaction UTP + L-glutamine + ATP + H2O = CTP + L-glutamate + ADP + phosphate + 2 H(+). The enzyme catalyses L-glutamine + H2O = L-glutamate + NH4(+). It carries out the reaction UTP + NH4(+) + ATP = CTP + ADP + phosphate + 2 H(+). Its pathway is pyrimidine metabolism; CTP biosynthesis via de novo pathway; CTP from UDP: step 2/2. Its activity is regulated as follows. Allosterically activated by GTP, when glutamine is the substrate; GTP has no effect on the reaction when ammonia is the substrate. The allosteric effector GTP functions by stabilizing the protein conformation that binds the tetrahedral intermediate(s) formed during glutamine hydrolysis. Inhibited by the product CTP, via allosteric rather than competitive inhibition. Catalyzes the ATP-dependent amination of UTP to CTP with either L-glutamine or ammonia as the source of nitrogen. Regulates intracellular CTP levels through interactions with the four ribonucleotide triphosphates. The sequence is that of CTP synthase from Francisella tularensis subsp. tularensis (strain FSC 198).